The chain runs to 137 residues: Ribonuclease P protein component (137 aa).

The protein belongs to the RnpA family. As to quaternary structure, consists of a catalytic RNA component (M1 or rnpB) and a protein subunit.

It catalyses the reaction Endonucleolytic cleavage of RNA, removing 5'-extranucleotides from tRNA precursor.. Functionally, RNaseP catalyzes the removal of the 5'-leader sequence from pre-tRNA to produce the mature 5'-terminus. It can also cleave other RNA substrates such as 4.5S RNA. The protein component plays an auxiliary but essential role in vivo by binding to the 5'-leader sequence and broadening the substrate specificity of the ribozyme. The sequence is that of Ribonuclease P protein component from Porphyromonas gingivalis (strain ATCC 33277 / DSM 20709 / CIP 103683 / JCM 12257 / NCTC 11834 / 2561).